The primary structure comprises 306 residues: Glutaminase (306 aa).

Substrate-binding residues include serine 64, asparagine 115, glutamate 159, asparagine 166, tyrosine 190, tyrosine 242, and valine 260.

It belongs to the glutaminase family. In terms of assembly, homotetramer.

The catalysed reaction is L-glutamine + H2O = L-glutamate + NH4(+). The protein is Glutaminase of Vibrio parahaemolyticus serotype O3:K6 (strain RIMD 2210633).